The following is a 507-amino-acid chain: Proline--tRNA ligase (507 aa).

This sequence belongs to the class-II aminoacyl-tRNA synthetase family. ProS type 3 subfamily. In terms of assembly, homodimer.

The protein localises to the cytoplasm. The catalysed reaction is tRNA(Pro) + L-proline + ATP = L-prolyl-tRNA(Pro) + AMP + diphosphate. In terms of biological role, catalyzes the attachment of proline to tRNA(Pro) in a two-step reaction: proline is first activated by ATP to form Pro-AMP and then transferred to the acceptor end of tRNA(Pro). This Protochlamydia amoebophila (strain UWE25) protein is Proline--tRNA ligase.